The chain runs to 328 residues: MIRPALRTDWTLEEARAIHALPFPELMHRAQTLHRAHFDPTAIETASLLSIKTGGCPEDCGYCSQSAHHDTGVKATKLMGTEEVLAAARRAKAAGAQRFCMGAAWRSPKDRDMDRLCDMVRGVADLGLETCMTLGMLSPGQVARLKAAGLDFYNHNIDTSPAYYARIASTRTMEDRLETVEQVRRGGIKVCCGGILGMGEAEEDRIALLVTLATLPAHPDSVPVNLWNEIEGVPVQGRAQAVDPFALVRIVALARILMPASVVRLSAGRTEMSDELQALCFLAGANSIFVGDQLLTTGNPAAWKDRDLLSRLGLHVAPARARPPVAAD.

The 220-residue stretch at T41–A260 folds into the Radical SAM core domain. Residues C56, C60, and C63 each coordinate [4Fe-4S] cluster. The [2Fe-2S] cluster site is built by C100, C131, C191, and R264.

This sequence belongs to the radical SAM superfamily. Biotin synthase family. Homodimer. The cofactor is [4Fe-4S] cluster. [2Fe-2S] cluster is required as a cofactor.

It catalyses the reaction (4R,5S)-dethiobiotin + (sulfur carrier)-SH + 2 reduced [2Fe-2S]-[ferredoxin] + 2 S-adenosyl-L-methionine = (sulfur carrier)-H + biotin + 2 5'-deoxyadenosine + 2 L-methionine + 2 oxidized [2Fe-2S]-[ferredoxin]. It functions in the pathway cofactor biosynthesis; biotin biosynthesis; biotin from 7,8-diaminononanoate: step 2/2. Its function is as follows. Catalyzes the conversion of dethiobiotin (DTB) to biotin by the insertion of a sulfur atom into dethiobiotin via a radical-based mechanism. The chain is Biotin synthase from Cereibacter sphaeroides (strain ATCC 17023 / DSM 158 / JCM 6121 / CCUG 31486 / LMG 2827 / NBRC 12203 / NCIMB 8253 / ATH 2.4.1.) (Rhodobacter sphaeroides).